Consider the following 51-residue polypeptide: Large ribosomal subunit protein bL33 (51 aa).

The segment at 1–21 is disordered; sequence MRDKIKLESSAGTGHFYTTTK. Polar residues predominate over residues 10–20; that stretch reads SAGTGHFYTTT.

Belongs to the bacterial ribosomal protein bL33 family.

This chain is Large ribosomal subunit protein bL33 (rpmG), found in Neisseria meningitidis serogroup A / serotype 4A (strain DSM 15465 / Z2491).